Consider the following 553-residue polypeptide: Retrotransposon Gag-like protein 3 (553 aa).

Positions 2–43 form a coiled coil; it reads VEDLAASYVTLKLENEILQAQVKRLMEENAALQAQIPELQKS. Disordered regions lie at residues 38-274 and 474-514; these read PELQ…PLDP and SGGV…EAER. Basic and acidic residues predominate over residues 45–57; sequence AVKEHEPLRKPSE. Over residues 58–73 the composition is skewed to low complexity; sequence AQEPPESPEFPAARES. Residues 87 to 113 are compositionally biased toward basic and acidic residues; it reads EPTKIREPREPSAISELREPPEIKEPQ. Polar residues predominate over residues 118–127; it reads TNESGESSAI. Residues 132–147 are compositionally biased toward basic and acidic residues; that stretch reads GSPEIKEPHLPPKSKE. The segment covering 239 to 250 has biased composition (polar residues); that stretch reads QTVPEYQETSSQ. Residues 474 to 483 are compositionally biased toward low complexity; the sequence is SGGVDSSSSS. The segment covering 495 to 507 has biased composition (polar residues); the sequence is TENQPVQATSNRP. Residues 523–537 form a CCHC-type zinc finger; the sequence is CLYCGHPGHFARDCP.

In terms of tissue distribution, expressed in embryonic myogenic progenitor cells, not expressed in adult and aged satellite cells.

Its subcellular location is the nucleus. Its function is as follows. May function as a transcriptional regulator. Plays a role in postnatal myogenesis, may be involved in the regulation of satellite cells self-renewal. This chain is Retrotransposon Gag-like protein 3, found in Mus musculus (Mouse).